Here is a 194-residue protein sequence, read N- to C-terminus: Imidazole glycerol phosphate synthase subunit HisH (194 aa).

Positions 3 to 194 (RIAIVDLGIG…LILLRNFRRL (192 aa)) constitute a Glutamine amidotransferase type-1 domain. Cysteine 74 functions as the Nucleophile in the catalytic mechanism. Catalysis depends on residues histidine 176 and glutamate 178.

In terms of assembly, heterodimer of HisH and HisF.

It localises to the cytoplasm. The catalysed reaction is 5-[(5-phospho-1-deoxy-D-ribulos-1-ylimino)methylamino]-1-(5-phospho-beta-D-ribosyl)imidazole-4-carboxamide + L-glutamine = D-erythro-1-(imidazol-4-yl)glycerol 3-phosphate + 5-amino-1-(5-phospho-beta-D-ribosyl)imidazole-4-carboxamide + L-glutamate + H(+). It carries out the reaction L-glutamine + H2O = L-glutamate + NH4(+). It functions in the pathway amino-acid biosynthesis; L-histidine biosynthesis; L-histidine from 5-phospho-alpha-D-ribose 1-diphosphate: step 5/9. IGPS catalyzes the conversion of PRFAR and glutamine to IGP, AICAR and glutamate. The HisH subunit catalyzes the hydrolysis of glutamine to glutamate and ammonia as part of the synthesis of IGP and AICAR. The resulting ammonia molecule is channeled to the active site of HisF. The protein is Imidazole glycerol phosphate synthase subunit HisH of Pyrococcus furiosus (strain ATCC 43587 / DSM 3638 / JCM 8422 / Vc1).